A 243-amino-acid chain; its full sequence is Type III pantothenate kinase (243 aa).

7–14 (DLGNSRFK) lines the ATP pocket. Substrate contacts are provided by residues tyrosine 91 and 98–101 (GVDR). The active-site Proton acceptor is aspartate 100. Threonine 122 is a binding site for ATP. Threonine 172 contributes to the substrate binding site.

The protein belongs to the type III pantothenate kinase family. In terms of assembly, homodimer. NH4(+) serves as cofactor. The cofactor is K(+).

It localises to the cytoplasm. It catalyses the reaction (R)-pantothenate + ATP = (R)-4'-phosphopantothenate + ADP + H(+). Its pathway is cofactor biosynthesis; coenzyme A biosynthesis; CoA from (R)-pantothenate: step 1/5. Its function is as follows. Catalyzes the phosphorylation of pantothenate (Pan), the first step in CoA biosynthesis. In Stenotrophomonas maltophilia (strain K279a), this protein is Type III pantothenate kinase.